A 299-amino-acid chain; its full sequence is Homoserine kinase (299 aa).

84–94 contributes to the ATP binding site; it reads PISRGLGSSSA.

Belongs to the GHMP kinase family. Homoserine kinase subfamily.

It is found in the cytoplasm. The enzyme catalyses L-homoserine + ATP = O-phospho-L-homoserine + ADP + H(+). It participates in amino-acid biosynthesis; L-threonine biosynthesis; L-threonine from L-aspartate: step 4/5. In terms of biological role, catalyzes the ATP-dependent phosphorylation of L-homoserine to L-homoserine phosphate. The polypeptide is Homoserine kinase (Helicobacter hepaticus (strain ATCC 51449 / 3B1)).